The primary structure comprises 560 residues: Thermosome subunit alpha (560 aa).

Positions 535-547 (SEKKGGEGSKEES) are enriched in basic and acidic residues. The interval 535–560 (SEKKGGEGSKEESGGEGGAGTPSLGD) is disordered.

It belongs to the TCP-1 chaperonin family. Forms a heterooligomeric complex of two stacked nine-membered rings; one of alpha and the other of beta subunits. Sometimes called a 'rosettasome'.

The protein resides in the cytoplasm. The enzyme catalyses ATP + H2O = ADP + phosphate + H(+). Functionally, molecular chaperone; binds unfolded polypeptides in vitro, stimulates protein folding and has ATPase activity. One of the most abundant proteins in the cell at all temperatures. The sequence is that of Thermosome subunit alpha (thsA) from Saccharolobus shibatae (strain ATCC 51178 / DSM 5389 / JCM 8931 / NBRC 15437 / B12) (Sulfolobus shibatae).